Consider the following 252-residue polypeptide: Imidazole glycerol phosphate synthase subunit HisF (252 aa).

Catalysis depends on residues Asp11 and Asp130.

Belongs to the HisA/HisF family. In terms of assembly, heterodimer of HisH and HisF.

Its subcellular location is the cytoplasm. The enzyme catalyses 5-[(5-phospho-1-deoxy-D-ribulos-1-ylimino)methylamino]-1-(5-phospho-beta-D-ribosyl)imidazole-4-carboxamide + L-glutamine = D-erythro-1-(imidazol-4-yl)glycerol 3-phosphate + 5-amino-1-(5-phospho-beta-D-ribosyl)imidazole-4-carboxamide + L-glutamate + H(+). It participates in amino-acid biosynthesis; L-histidine biosynthesis; L-histidine from 5-phospho-alpha-D-ribose 1-diphosphate: step 5/9. Its function is as follows. IGPS catalyzes the conversion of PRFAR and glutamine to IGP, AICAR and glutamate. The HisF subunit catalyzes the cyclization activity that produces IGP and AICAR from PRFAR using the ammonia provided by the HisH subunit. This is Imidazole glycerol phosphate synthase subunit HisF from Thermococcus onnurineus (strain NA1).